Consider the following 123-residue polypeptide: Galanin peptides (123 aa).

A signal peptide spans 1 to 19; the sequence is MPRGSVLLLASLLLAAALS. Positions 20 to 30 are excised as a propeptide; sequence ATLGLGSPVKE. Over residues 53-66 the composition is skewed to basic and acidic residues; the sequence is SFQDKHGLAGKREL. Residues 53–79 form a disordered region; sequence SFQDKHGLAGKRELEPEDEARPGSFDR. Position 61 is an alanine amide (alanine 61). The residue at position 116 (serine 116) is a Phosphoserine.

Belongs to the galanin family.

Its subcellular location is the secreted. Endocrine hormone of the central and peripheral nervous systems that binds and activates the G protein-coupled receptors GALR1, GALR2, and GALR3. This small neuropeptide may regulate diverse physiologic functions including contraction of smooth muscle of the gastrointestinal and genitourinary tract, growth hormone and insulin release and adrenal secretion. This chain is Galanin peptides (GAL), found in Bos taurus (Bovine).